The following is a 346-amino-acid chain: Methylthioribose-1-phosphate isomerase (346 aa).

Residues 46–48 (RGA), R89, and Q196 contribute to the substrate site. D237 serves as the catalytic Proton donor. Position 247–248 (247–248 (NK)) interacts with substrate.

It belongs to the eIF-2B alpha/beta/delta subunits family. MtnA subfamily.

The catalysed reaction is 5-(methylsulfanyl)-alpha-D-ribose 1-phosphate = 5-(methylsulfanyl)-D-ribulose 1-phosphate. Its pathway is amino-acid biosynthesis; L-methionine biosynthesis via salvage pathway; L-methionine from S-methyl-5-thio-alpha-D-ribose 1-phosphate: step 1/6. Functionally, catalyzes the interconversion of methylthioribose-1-phosphate (MTR-1-P) into methylthioribulose-1-phosphate (MTRu-1-P). This Geobacter sp. (strain M21) protein is Methylthioribose-1-phosphate isomerase.